Here is a 179-residue protein sequence, read N- to C-terminus: Ribosome maturation factor RimM (179 aa).

The 80-residue stretch at 95–174 folds into the PRC barrel domain; it reads KDEFFYFDIL…QIFCTQDAFL (80 aa).

The protein belongs to the RimM family. In terms of assembly, binds ribosomal protein uS19.

It localises to the cytoplasm. In terms of biological role, an accessory protein needed during the final step in the assembly of 30S ribosomal subunit, possibly for assembly of the head region. Essential for efficient processing of 16S rRNA. May be needed both before and after RbfA during the maturation of 16S rRNA. It has affinity for free ribosomal 30S subunits but not for 70S ribosomes. This chain is Ribosome maturation factor RimM, found in Campylobacter jejuni subsp. doylei (strain ATCC BAA-1458 / RM4099 / 269.97).